Consider the following 383-residue polypeptide: Probable endoplasmic reticulum-Golgi intermediate compartment protein 3 (383 aa).

The Cytoplasmic segment spans residues 1-26; it reads MLISQLKKFDAYPKTVDDFRVKTYTG. Residues 27 to 47 traverse the membrane as a helical segment; that stretch reads AIVSIIGGVFILWLFFSQVTL. Topologically, residues 48 to 347 are lumenal; it reads YFSTDIHHEL…GKSFASFLTN (300 aa). The chain crosses the membrane as a helical span at residues 348 to 368; sequence VCAIIGGVFTVFGIFDSFIYY. At 369 to 383 the chain is on the cytoplasmic side; that stretch reads STKNLQKKIDLGKTF.

It belongs to the ERGIC family.

The protein resides in the endoplasmic reticulum-Golgi intermediate compartment membrane. Its subcellular location is the golgi apparatus. It localises to the cis-Golgi network membrane. The protein localises to the endoplasmic reticulum membrane. Its function is as follows. Possible role in transport between endoplasmic reticulum and Golgi. The protein is Probable endoplasmic reticulum-Golgi intermediate compartment protein 3 (ergic3) of Dictyostelium discoideum (Social amoeba).